Consider the following 569-residue polypeptide: MELFYELLLTAAASLLVAFLLARLLASAATASDPRRRAPDHAAVIAEEEAVVVEEERIIEVDEVEVKSARARECVVSEGWVEVGRASSAEGKLECLPEEEEAPAKAARELVLDAVLEEREEEGQVGEERCDLAAAVAEVVGVKPHELGVEAAPGEVSDVTLEEGKVQDVGVEQHDLVAEAAPREALDTGLEKQGVPIIEAVEIKRQDDLGAEVAPSDVPEVEFEQQGVRIIEAIDVNQHHRVALAAPAEVVDAGLEERVQAIEAGSSGLTSETVPEEVLDELSEKQEEQVIEEKEHQLAAATAPVAIPGVALAETEELKEEQSSEKAVNVHEEVQSKDEAKCKLHLVDQQEGSASKVELVGRNTDNVEISHGSSSGDKMIAELTEEELTLQGVPADETQTDMEFGEWEGIERTEIEKRFGVAAAFASSDAGMAALSKLDSDVQLQLQGLLKVAIDGPCYDSTQPLTLRPSSRAKWAAWQKLGNMYPETAMERYMNLLSEAIPGWMGDNISGTKEHEAGDDAVGSVLTMTSNTINQHDSQGNEDNTGMYEGHLTSSPNPEKGQSSDIPAE.

Positions 1–31 (MELFYELLLTAAASLLVAFLLARLLASAATA) are cleaved as a signal peptide. The region spanning 415–506 (IEKRFGVAAA…LSEAIPGWMG (92 aa)) is the ACB domain. The an acyl-CoA site is built by lysine 474 and tyrosine 493. A glycan (N-linked (GlcNAc...) asparagine) is linked at asparagine 508. 2 stretches are compositionally biased toward polar residues: residues 533–544 (INQHDSQGNEDN) and 552–569 (LTSSPNPEKGQSSDIPAE). Positions 533-569 (INQHDSQGNEDNTGMYEGHLTSSPNPEKGQSSDIPAE) are disordered.

The protein belongs to the ACBP family. Highly expressed in seeds and leaves. Expressed at low levels in roots.

The protein localises to the endoplasmic reticulum. In terms of biological role, binds medium- and long-chain acyl-CoA esters with high affinity. Can interact in vitro with palmitoyl-CoA and linolenoyl-CoA. Binds phosphatidic acid (PA) and phosphatidylcholine (PC) in vitro. May play a role in the biosynthesis of phospholipids. This chain is Acyl-CoA-binding domain-containing protein 5, found in Oryza sativa subsp. japonica (Rice).